Reading from the N-terminus, the 2140-residue chain is Dedicator of cytokinesis protein 7 (2140 aa).

Phosphoserine occurs at positions 30, 180, and 182. Residues phenylalanine 138 to isoleucine 183 are disordered. The stretch at phenylalanine 365–arginine 395 forms a coiled coil. Lysine 381 bears the N6-methyllysine mark. Threonine 450 is modified (phosphothreonine). Serine 452 carries the post-translational modification Phosphoserine. The C2 DOCK-type domain maps to arginine 561–valine 727. A phosphoserine mark is found at serine 862, serine 864, serine 882, serine 888, serine 896, serine 900, and serine 905. The span at serine 888–asparagine 901 shows a compositional bias: low complexity. Residues serine 888–phenylalanine 971 are disordered. A phosphothreonine mark is found at threonine 907 and threonine 909. A phosphoserine mark is found at serine 910, serine 929, serine 964, serine 1383, lysine 1390, alanine 1394, glutamate 1398, tyrosine 1421, serine 1425, arginine 1429, serine 1430, serine 1432, serine 1434, and serine 1438. Residues serine 943–phenylalanine 971 are compositionally biased toward polar residues. The region spanning lysine 1678 to proline 2114 is the DOCKER domain. Lysine 1962 is subject to N6-acetyllysine. Residues aspartate 2086 to lysine 2112 are a coiled coil. Serine 2129 carries the post-translational modification Phosphoserine.

The protein belongs to the DOCK family. In terms of assembly, component of the DOCK7-induced septin displacement/DISP complex, at least composed of DOCK7, LRCH3 and MYO6. Interacts with TSC1. Interacts with nucleotide-free RAC1 and RAC3. Interacts with TACC3 and CRY1. Interacts with NOD2. As to expression, widely expressed.

The protein resides in the cell projection. The protein localises to the axon. Its function is as follows. Functions as a guanine nucleotide exchange factor (GEF), which activates Rac1 and Rac3 Rho small GTPases by exchanging bound GDP for free GTP. Does not have a GEF activity for CDC42. Required for STMN1 'Ser-15' phosphorylation during axon formation and consequently for neuronal polarization. As part of the DISP complex, may regulate the association of septins with actin and thereby regulate the actin cytoskeleton. Has a role in pigmentation. Involved in the regulation of cortical neurogenesis through the control of radial glial cells (RGCs) proliferation versus differentiation; negatively regulates the basal-to-apical interkinetic nuclear migration of RGCs by antagonizing the microtubule growth-promoting function of TACC3. This is Dedicator of cytokinesis protein 7 (DOCK7) from Homo sapiens (Human).